The chain runs to 351 residues: Photosystem II D2 protein (351 aa).

A helical membrane pass occupies residues 39–59; it reads CSYLALGAWFTGTTFVTSWYT. H116 lines the chlorophyll a pocket. A helical membrane pass occupies residues 123–139; sequence GFCLRQFEIARLVGLRP. The pheophytin a site is built by Q128 and N141. A helical transmembrane segment spans residues 151–164; the sequence is VFVSVFLLYPLGQA. Position 196 (H196) interacts with chlorophyll a. A helical transmembrane segment spans residues 206-226; sequence GALLCAIHGATVQNTLFEDGE. A plastoquinone is bound by residues H213 and F260. Residue H213 participates in Fe cation binding. Position 267 (H267) interacts with Fe cation. Residues 277–293 traverse the membrane as a helical segment; the sequence is GLWASSIGIVGLALNLR.

The protein belongs to the reaction center PufL/M/PsbA/D family. PSII is composed of 1 copy each of membrane proteins PsbA, PsbB, PsbC, PsbD, PsbE, PsbF, PsbH, PsbI, PsbJ, PsbK, PsbL, PsbM, PsbT, PsbX, PsbY, PsbZ, Psb30/Ycf12, at least 3 peripheral proteins of the oxygen-evolving complex and a large number of cofactors. It forms dimeric complexes. It depends on The D1/D2 heterodimer binds P680, chlorophylls that are the primary electron donor of PSII, and subsequent electron acceptors. It shares a non-heme iron and each subunit binds pheophytin, quinone, additional chlorophylls, carotenoids and lipids. There is also a Cl(-1) ion associated with D1 and D2, which is required for oxygen evolution. The PSII complex binds additional chlorophylls, carotenoids and specific lipids. as a cofactor.

It localises to the plastid. It is found in the chloroplast thylakoid membrane. It carries out the reaction 2 a plastoquinone + 4 hnu + 2 H2O = 2 a plastoquinol + O2. Photosystem II (PSII) is a light-driven water:plastoquinone oxidoreductase that uses light energy to abstract electrons from H(2)O, generating O(2) and a proton gradient subsequently used for ATP formation. It consists of a core antenna complex that captures photons, and an electron transfer chain that converts photonic excitation into a charge separation. The D1/D2 (PsbA/PsbD) reaction center heterodimer binds P680, the primary electron donor of PSII as well as several subsequent electron acceptors. D2 is needed for assembly of a stable PSII complex. The sequence is that of Photosystem II D2 protein from Cyanidioschyzon merolae (strain NIES-3377 / 10D) (Unicellular red alga).